The chain runs to 170 residues: Crossover junction endodeoxyribonuclease RuvC (170 aa).

Residues Asp11, Glu71, and Asp143 contribute to the active site. Residues Asp11, Glu71, and Asp143 each contribute to the Mg(2+) site.

Belongs to the RuvC family. As to quaternary structure, homodimer which binds Holliday junction (HJ) DNA. The HJ becomes 2-fold symmetrical on binding to RuvC with unstacked arms; it has a different conformation from HJ DNA in complex with RuvA. In the full resolvosome a probable DNA-RuvA(4)-RuvB(12)-RuvC(2) complex forms which resolves the HJ. Mg(2+) serves as cofactor.

The protein localises to the cytoplasm. The enzyme catalyses Endonucleolytic cleavage at a junction such as a reciprocal single-stranded crossover between two homologous DNA duplexes (Holliday junction).. Functionally, the RuvA-RuvB-RuvC complex processes Holliday junction (HJ) DNA during genetic recombination and DNA repair. Endonuclease that resolves HJ intermediates. Cleaves cruciform DNA by making single-stranded nicks across the HJ at symmetrical positions within the homologous arms, yielding a 5'-phosphate and a 3'-hydroxyl group; requires a central core of homology in the junction. The consensus cleavage sequence is 5'-(A/T)TT(C/G)-3'. Cleavage occurs on the 3'-side of the TT dinucleotide at the point of strand exchange. HJ branch migration catalyzed by RuvA-RuvB allows RuvC to scan DNA until it finds its consensus sequence, where it cleaves and resolves the cruciform DNA. In Rhizobium meliloti (strain 1021) (Ensifer meliloti), this protein is Crossover junction endodeoxyribonuclease RuvC.